Consider the following 498-residue polypeptide: Cytochrome P450 monooxygenase ltmP (498 aa).

The first 21 residues, 1–21, serve as a signal peptide directing secretion; the sequence is MLMLHAVPVGICLLLWYVVYG. N-linked (GlcNAc...) asparagine glycosylation occurs at Asn420. Cys435 is a heme binding site.

Belongs to the cytochrome P450 family. It depends on heme as a cofactor.

It functions in the pathway secondary metabolite biosynthesis. Cytochrome P450 monooxygenase; part of the gene clusters that mediates the biosynthesis of lolitrems, indole-diterpene mycotoxins that are potent tremorgens in mammals, and are synthesized by clavicipitaceous fungal endophytes in association with their grass hosts. The geranylgeranyl diphosphate (GGPP) synthase ltmG is proposed to catalyze the first step in lolitrem biosynthesis. LtmG catalyzes a series of iterative condensations of isopentenyl diphosphate (IPP) with dimethylallyl diphosphate (DMAPP), geranyl diphosphate (GPP), and farnesyl diphosphate (FPP), to form GGPP. GGPP then condenses with indole-3-glycerol phosphate to form 3-geranylgeranylindole, an acyclic intermediate, to be incorporated into paxilline. Either ltmG or ltmC could be responsible for this step, as both are putative prenyl transferases. The FAD-dependent monooxygenase ltmM then catalyzes the epoxidation of the two terminal alkenes of the geranylgeranyl moiety, which is subsequently cyclized by ltmB, to paspaline. The cytochrome P450 monooxygenases ltmQ and ltmP can sequentially oxidize paspaline to terpendole E and terpendole F. Alternatively, ltmP converts paspaline to an intermediate which is oxidized by ltmQ to terpendole F. LtmF, ltmK, ltmE and ltmJ appear to be unique to the epichloe endophytes. The prenyltransferase ltmF is involved in the 27-hydroxyl-O-prenylation. The cytochrome P450 monooxygenase ltmK is required for the oxidative acetal ring formation. The multi-functional prenyltransferase ltmE is required for C20- and C21-prenylations of the indole ring of paspalanes and acts together with the cytochrome P450 monooxygenase ltmJ to yield lolitremanes by multiple oxidations and ring closures. The stereoisomer pairs of lolitriol and lolitrem N or lolitrem B and lolitrem F may be attributed to variations in the way in which ring closure can occur under the action of ltmJ. While the major product of this pathway is lolitrem B, the prenyl transferases and cytochrome P450 monooxygenases identified in this pathway have a remarkable versatility in their regio- and stereo-specificities to generate a diverse range of metabolites that are products of a metabolic grid rather than a linear pathway. In Epichloe festucae var. lolii (Neotyphodium lolii), this protein is Cytochrome P450 monooxygenase ltmP.